The sequence spans 181 residues: Transcription factor bHLH167 (181 aa).

Residues 1 to 22 (MGRAREIGEGNSSSLREQRNLR) are disordered. Residues 14-63 (SLREQRNLREKDRRMRMKHLFSILSSHVSPTRKLPVPHLIDQATSYMIQL) form the bHLH domain.

This sequence belongs to the bHLH protein family.

The protein localises to the nucleus. The sequence is that of Transcription factor bHLH167 from Arabidopsis thaliana (Mouse-ear cress).